The following is a 176-amino-acid chain: NAD(P)H-quinone oxidoreductase subunit 6, chloroplastic (176 aa).

5 helical membrane passes run 10-30, 32-52, 61-81, 90-112, and 152-172; these read ILLV…VLFT, PIYS…FYIP, AQLL…VMFM, FHLW…FSLI, and FYLP…GAIA.

It belongs to the complex I subunit 6 family. In terms of assembly, NDH is composed of at least 16 different subunits, 5 of which are encoded in the nucleus.

It localises to the plastid. It is found in the chloroplast thylakoid membrane. The catalysed reaction is a plastoquinone + NADH + (n+1) H(+)(in) = a plastoquinol + NAD(+) + n H(+)(out). The enzyme catalyses a plastoquinone + NADPH + (n+1) H(+)(in) = a plastoquinol + NADP(+) + n H(+)(out). Its function is as follows. NDH shuttles electrons from NAD(P)H:plastoquinone, via FMN and iron-sulfur (Fe-S) centers, to quinones in the photosynthetic chain and possibly in a chloroplast respiratory chain. The immediate electron acceptor for the enzyme in this species is believed to be plastoquinone. Couples the redox reaction to proton translocation, and thus conserves the redox energy in a proton gradient. The polypeptide is NAD(P)H-quinone oxidoreductase subunit 6, chloroplastic (ndhG) (Ceratophyllum demersum (Rigid hornwort)).